We begin with the raw amino-acid sequence, 730 residues long: Tubulin polyglutamylase ttll-5 (730 aa).

Residues R120–S478 enclose the TTL domain. Residues S278 to L281, K291, and D293 each bind ATP. The disordered stretch occupies residues K594–S618. The span at S600 to S618 shows a compositional bias: low complexity.

It belongs to the tubulin--tyrosine ligase family. In terms of tissue distribution, expressed in body wall muscles. Not expressed in sensory neurons.

It catalyses the reaction L-glutamyl-[protein] + L-glutamate + ATP = gamma-L-glutamyl-L-glutamyl-[protein] + ADP + phosphate + H(+). Functionally, polyglutamylase which preferentially modifies alpha-tubulin. Involved in the side-chain initiation step of the polyglutamylation reaction rather than in the elongation step. Together with ttll-4 and ttll-11, required for male mating. Probably by regulating microtubule stability via the glutamylation of tubulin, negatively regulates axon regrowth after injury in PLM neurons. This is Tubulin polyglutamylase ttll-5 from Caenorhabditis elegans.